Here is a 145-residue protein sequence, read N- to C-terminus: Transcriptional regulator MraZ (145 aa).

SpoVT-AbrB domains lie at Asn-7–Leu-54 and Gly-83–Ala-126.

It belongs to the MraZ family. In terms of assembly, forms oligomers.

It is found in the cytoplasm. The protein localises to the nucleoid. This chain is Transcriptional regulator MraZ, found in Rhizobium johnstonii (strain DSM 114642 / LMG 32736 / 3841) (Rhizobium leguminosarum bv. viciae).